The primary structure comprises 120 residues: Large ribosomal subunit protein uL18 (120 aa).

The protein belongs to the universal ribosomal protein uL18 family. In terms of assembly, part of the 50S ribosomal subunit. Part of the 5S rRNA/L5/L18/L25 subcomplex. Contacts the 23S rRNA and 5S rRNA. Required for catalysis of RNase M5.

This is one of the proteins that bind and probably mediate the attachment of the 5S RNA into the large ribosomal subunit, where it forms part of the central protuberance. Its function is as follows. Required for correct processing of both the 5' and 3' ends of 5S rRNA precursor, which is does in conjunction with ribonuclease M5 (RNase M5, rnmV). Possibly folds the 5S rRNA precursor into the correct conformation, thus acting as a chaperone. The polypeptide is Large ribosomal subunit protein uL18 (Bacillus subtilis (strain 168)).